The chain runs to 503 residues: Opine oxidase subunit A (503 aa).

To T-protein and to dimethylglycine dehydrogenase. Heterodimer of a subunit A and a subunit B.

Its pathway is opine metabolism; octopine degradation. In terms of biological role, oxidative cleavage of octopine into L-arginine and pyruvate. In Agrobacterium tumefaciens (strain Ach5), this protein is Opine oxidase subunit A (ooxA).